The sequence spans 559 residues: (-)-drimenol synthase (559 aa).

Positions 311, 315, 456, 460, and 464 each coordinate Mg(2+). The DDXXD motif motif lies at 311–315 (DDIYD).

Belongs to the terpene synthase family. The cofactor is Mg(2+).

The catalysed reaction is (2E,6E)-farnesyl diphosphate + H2O = (5S,9S,10S)-drim-7-en-11-ol + diphosphate. It participates in secondary metabolite biosynthesis; terpenoid biosynthesis. Catalyzes the conversion of (2E,6E)-farnesyl diphosphate (FPP) into drimenol, a precursor of the sesquiterpenoid polygodial. Polygodial has been shown to be an antifeedant for a number of herbivorous insects. In Persicaria hydropiper (Marshpepper knotweed), this protein is (-)-drimenol synthase.